Consider the following 347-residue polypeptide: Protease HtpX homolog (347 aa).

4 consecutive transmembrane segments (helical) span residues 8 to 28 (VALGLYIVGYIFMLIIAATIA), 44 to 64 (AMALTAVLVVLTTAFIIYLFV), 76 to 96 (LSFLLGLIFFVVLMNIITYFA), and 141 to 163 (AFAYGNFLTGRYVAVTSSMLALT). His-174 serves as a coordination point for Zn(2+). The active site involves Glu-175. His-178 serves as a coordination point for Zn(2+). 2 helical membrane passes run 185-205 (AIMLLFGILPSIVYYLGVTAV) and 221-241 (ILAAVGIAAVIVSFLIQLLVL). Residue Glu-248 participates in Zn(2+) binding.

The protein belongs to the peptidase M48B family. It depends on Zn(2+) as a cofactor.

It is found in the cell membrane. This Pyrobaculum aerophilum (strain ATCC 51768 / DSM 7523 / JCM 9630 / CIP 104966 / NBRC 100827 / IM2) protein is Protease HtpX homolog.